A 193-amino-acid polypeptide reads, in one-letter code: Transcriptional activator GvpE2 (193 aa).

143-148 (KRKVYR) serves as a coordination point for DNA. The segment at 153–184 (QAAIEHVDSVVLQLLTFAVGLQTIMADCIVNQ) is leucine-zipper.

As to quaternary structure, homodimer. Interacts with endogenous GvpD, also with GvpD from H.mediterranei.

The protein resides in the cytoplasm. With respect to regulation, degraded once GvpD is translated; degradation requires 'Arg-494' of GvpD; tested in transgenic H.volcanii. Fusion of green fluorescent protein to its C-terminus partially protects it from degradation. In terms of biological role, plays a regulatory role in gas vesicle synthesis, required to activate transcription of the c-gvpA operon. Gas vesicles are hollow, gas filled proteinaceous nanostructures found in several microbial planktonic microorganisms. They allow positioning of halobacteria at the optimal depth for growth in the poorly aerated, shallow brine pools of their habitat. Its function is as follows. Expression of 2 c-vac DNA fragments containing 2 divergently transcribed regions (gvpE-gvpF-gvpG-gvpH-gvpI-gvpJ-gvpK-gvpL-gvpM and gvpA-gvpC-gvpN-gvpO) allows H.volcanii to produce gas vesicles. All site-directed mutagenesis is tested in H.volcanii. This is Transcriptional activator GvpE2 from Halobacterium salinarum (strain ATCC 700922 / JCM 11081 / NRC-1) (Halobacterium halobium).